Reading from the N-terminus, the 63-residue chain is Small ribosomal subunit protein eS31 (63 aa).

Zn(2+)-binding residues include C34, C37, C53, and C56. The segment at 34 to 56 adopts a C4-type zinc-finger fold; the sequence is CPKCGSVMAFHREPVPRWHCGKC.

The protein belongs to the eukaryotic ribosomal protein eS31 family. Part of the 30S ribosomal subunit. The cofactor is Zn(2+).

In Pyrobaculum neutrophilum (strain DSM 2338 / JCM 9278 / NBRC 100436 / V24Sta) (Thermoproteus neutrophilus), this protein is Small ribosomal subunit protein eS31.